We begin with the raw amino-acid sequence, 559 residues long: Protein GRAVITROPIC IN THE LIGHT 1 (559 aa).

The segment at 107–127 (AVNRREEYDTEEEENEEEGEI) is disordered. The span at 114-127 (YDTEEEENEEEGEI) shows a compositional bias: acidic residues.

Its function is as follows. Required for red (R) and far red (FR) light-induced and phytochrome-mediated deregulation of negative gravitropism leading to randomization of hypocotyl growth orientation. The sequence is that of Protein GRAVITROPIC IN THE LIGHT 1 from Arabidopsis thaliana (Mouse-ear cress).